Reading from the N-terminus, the 157-residue chain is MQITIKDLQDLLSSVQRKKIQTLKLKKNKFELILNKPSKKVPQEVVSLKSSHIFKSIHSETINIPPKKTESINSKPSTNYATIVSPMVGTFYHSPAPGEKIFVQVGDIVKCNQTVCIIEAMKLMNEIEAEIEGIIIEILVKNGDIVDCGQALMKVET.

In terms of domain architecture, Biotinyl-binding spans 80–156 (YATIVSPMVG…DCGQALMKVE (77 aa)). Residue lysine 122 is modified to N6-biotinyllysine.

It is found in the plastid. The protein resides in the chloroplast. Its pathway is lipid metabolism; fatty acid biosynthesis. Its function is as follows. This protein is a component of the acetyl coenzyme A carboxylase complex; first, biotin carboxylase catalyzes the carboxylation of the carrier protein and then the transcarboxylase transfers the carboxyl group to form malonyl-CoA. The polypeptide is Biotin carboxyl carrier protein of acetyl-CoA carboxylase (accB) (Porphyra purpurea (Red seaweed)).